The sequence spans 391 residues: Rhizopuspepsin-2 (391 aa).

An N-terminal signal peptide occupies residues 1–21 (MKLTLISSCVALAFMALATEA). Residues 22–68 (APSGKKLSIPLTKNTNYKPSAKNAIQKALAKYHRFRTTSSSNSTSTE) constitute a propeptide, activation peptide. One can recognise a Peptidase A1 domain in the interval 84–388 (YYGKVTVGTP…NQEVPEVQIA (305 aa)). Asp102 is a catalytic residue. The cysteines at positions 115 and 118 are disulfide-linked. Asp285 is an active-site residue. A disulfide bridge links Cys319 with Cys352.

The protein belongs to the peptidase A1 family.

It catalyses the reaction Hydrolysis of proteins with broad specificity similar to that of pepsin A, preferring hydrophobic residues at P1 and P1'. Clots milk and activates trypsinogen. Does not cleave 4-Gln-|-His-5, but does cleave 10-His-|-Leu-11 and 12-Val-|-Glu-13 in B chain of insulin.. This is Rhizopuspepsin-2 from Rhizopus niveus.